A 1001-amino-acid chain; its full sequence is Ulvan lyase, long isoform (1001 aa).

The signal sequence occupies residues 1-21 (MNGLKMLLFSTTLLTAFTLHA). 126–127 (SH) is a substrate binding site. The Proton donor/acceptor role is filled by H127. Residues D189, D199, and K201 each coordinate Ca(2+). Substrate-binding residues include Y280 and R297. Residues D300, D303, and Y305 each contribute to the Ca(2+) site. Y361 contributes to the substrate binding site.

It belongs to the polysaccharide lyase 24 family.

Its function is as follows. Ulvan lyase involved in ulvan degradation. Ulvan is the main polysaccharide component of the Ulvales (green seaweed) cell wall. It is composed of disaccharide building blocks comprising 3-sulfated rhamnose (Rha3S) linked to D-glucuronic acid (GlcA), L-iduronic acid (IduA), or D-xylose (Xyl). Ulvan lyase catalyzes preferentially the endolytic cleavage of the glycosidic bond between Rha3S and the uronic acid GlcA, but not IduA, producing oligosaccharides that have unsaturated 4-deoxy-L-threo-hex-4-enopyranosiduronic acid (deltaUA) at the non-reducing end. The most abundant end products in the degradation of the ulvan polysaccharide were deltaUA-Rha3S disaccharides and deltaUA-Rha3S-IduA-Rha3S and deltaUA-Rha3S-Xyl-Rha3S tetrasaccharides. The protein is Ulvan lyase, long isoform of Pseudoalteromonas sp. (strain PLSV).